A 183-amino-acid chain; its full sequence is tRNA-splicing endonuclease (183 aa).

Residues Tyr120, His128, and Lys159 contribute to the active site.

Belongs to the tRNA-intron endonuclease family. Archaeal short subfamily. Homotetramer; although the tetramer contains four active sites, only two participate in the cleavage. Therefore, it should be considered as a dimer of dimers.

It carries out the reaction pretRNA = a 3'-half-tRNA molecule with a 5'-OH end + a 5'-half-tRNA molecule with a 2',3'-cyclic phosphate end + an intron with a 2',3'-cyclic phosphate and a 5'-hydroxyl terminus.. Its function is as follows. Endonuclease that removes tRNA introns. Cleaves pre-tRNA at the 5'- and 3'-splice sites to release the intron. The products are an intron and two tRNA half-molecules bearing 2',3' cyclic phosphate and 5'-OH termini. Recognizes a pseudosymmetric substrate in which 2 bulged loops of 3 bases are separated by a stem of 4 bp. The polypeptide is tRNA-splicing endonuclease (Pyrobaculum arsenaticum (strain DSM 13514 / JCM 11321 / PZ6)).